Here is a 192-residue protein sequence, read N- to C-terminus: Probable GTP-binding protein EngB (192 aa).

The EngB-type G domain maps to 22-192 (QLPEIVFVGR…LLEQLAIYTG (171 aa)). GTP-binding positions include 30–37 (GRSNVGKS), 57–61 (GKTQL), 75–78 (DLPG), 142–145 (TKYD), and 172–174 (YSA). The Mg(2+) site is built by Ser-37 and Thr-59.

This sequence belongs to the TRAFAC class TrmE-Era-EngA-EngB-Septin-like GTPase superfamily. EngB GTPase family. It depends on Mg(2+) as a cofactor.

Functionally, necessary for normal cell division and for the maintenance of normal septation. This is Probable GTP-binding protein EngB from Chlorobium phaeobacteroides (strain BS1).